We begin with the raw amino-acid sequence, 215 residues long: Probable transaldolase (215 aa).

Lysine 84 functions as the Schiff-base intermediate with substrate in the catalytic mechanism.

This sequence belongs to the transaldolase family. Type 3B subfamily.

The protein resides in the cytoplasm. It catalyses the reaction D-sedoheptulose 7-phosphate + D-glyceraldehyde 3-phosphate = D-erythrose 4-phosphate + beta-D-fructose 6-phosphate. The protein operates within carbohydrate degradation; pentose phosphate pathway; D-glyceraldehyde 3-phosphate and beta-D-fructose 6-phosphate from D-ribose 5-phosphate and D-xylulose 5-phosphate (non-oxidative stage): step 2/3. Transaldolase is important for the balance of metabolites in the pentose-phosphate pathway. This chain is Probable transaldolase, found in Exiguobacterium sibiricum (strain DSM 17290 / CCUG 55495 / CIP 109462 / JCM 13490 / 255-15).